The sequence spans 66 residues: Small ribosomal subunit protein eS27 (66 aa).

Zn(2+) is bound by residues Cys21, Cys24, Cys40, and Cys43. Residues 21-43 form a C4-type zinc finger; it reads CPNCGNEQTIFSHATFPVRCLSC.

Belongs to the eukaryotic ribosomal protein eS27 family. In terms of assembly, part of the 30S ribosomal subunit. It depends on Zn(2+) as a cofactor.

The protein is Small ribosomal subunit protein eS27 of Saccharolobus solfataricus (strain ATCC 35092 / DSM 1617 / JCM 11322 / P2) (Sulfolobus solfataricus).